The chain runs to 160 residues: Transcription antitermination protein NusB (160 aa).

The protein belongs to the NusB family.

Its function is as follows. Involved in transcription antitermination. Required for transcription of ribosomal RNA (rRNA) genes. Binds specifically to the boxA antiterminator sequence of the ribosomal RNA (rrn) operons. In Allorhizobium ampelinum (strain ATCC BAA-846 / DSM 112012 / S4) (Agrobacterium vitis (strain S4)), this protein is Transcription antitermination protein NusB.